A 145-amino-acid chain; its full sequence is Large ribosomal subunit protein uL13 (145 aa).

This sequence belongs to the universal ribosomal protein uL13 family. Part of the 50S ribosomal subunit.

Its function is as follows. This protein is one of the early assembly proteins of the 50S ribosomal subunit, although it is not seen to bind rRNA by itself. It is important during the early stages of 50S assembly. This chain is Large ribosomal subunit protein uL13, found in Halobacterium salinarum (strain ATCC 700922 / JCM 11081 / NRC-1) (Halobacterium halobium).